Consider the following 168-residue polypeptide: 6-pyruvoyl tetrahydrobiopterin synthase (168 aa).

Histidine 19 lines the Zn(2+) pocket. Residue cysteine 38 is the Proton acceptor of the active site. Positions 44 and 46 each coordinate Zn(2+). Catalysis depends on charge relay system residues histidine 85 and glutamate 130. A Phosphoserine modification is found at serine 159. Phosphothreonine is present on threonine 161. Residues serine 164, serine 165, and serine 167 each carry the phosphoserine modification.

It belongs to the PTPS family. As to quaternary structure, homohexamer formed of two homotrimers in a head to head fashion. It depends on Zn(2+) as a cofactor.

The enzyme catalyses 7,8-dihydroneopterin 3'-triphosphate = 6-pyruvoyl-5,6,7,8-tetrahydropterin + triphosphate + H(+). It participates in cofactor biosynthesis; tetrahydrobiopterin biosynthesis; tetrahydrobiopterin from 7,8-dihydroneopterin triphosphate: step 1/3. Its function is as follows. Required for pigment and biopterin synthesis. This chain is 6-pyruvoyl tetrahydrobiopterin synthase (pr), found in Drosophila melanogaster (Fruit fly).